A 1226-amino-acid chain; its full sequence is DNA-directed RNA polymerase subunit beta'' (1226 aa).

Zn(2+) is bound by residues C223, C297, C304, and C307.

This sequence belongs to the RNA polymerase beta' chain family. RpoC2 subfamily. In terms of assembly, in plastids the minimal PEP RNA polymerase catalytic core is composed of four subunits: alpha, beta, beta', and beta''. When a (nuclear-encoded) sigma factor is associated with the core the holoenzyme is formed, which can initiate transcription. Zn(2+) serves as cofactor.

It is found in the plastid. It localises to the chloroplast. The enzyme catalyses RNA(n) + a ribonucleoside 5'-triphosphate = RNA(n+1) + diphosphate. DNA-dependent RNA polymerase catalyzes the transcription of DNA into RNA using the four ribonucleoside triphosphates as substrates. This Pyropia yezoensis (Susabi-nori) protein is DNA-directed RNA polymerase subunit beta''.